We begin with the raw amino-acid sequence, 214 residues long: Large ribosomal subunit protein uL3 (214 aa).

The tract at residues 134-153 (ATHGNSLSHRAPGSIGQNQT) is disordered. Gln152 carries the post-translational modification N5-methylglutamine.

This sequence belongs to the universal ribosomal protein uL3 family. As to quaternary structure, part of the 50S ribosomal subunit. Forms a cluster with proteins L14 and L19. Methylated by PrmB.

One of the primary rRNA binding proteins, it binds directly near the 3'-end of the 23S rRNA, where it nucleates assembly of the 50S subunit. This is Large ribosomal subunit protein uL3 from Buchnera aphidicola subsp. Baizongia pistaciae (strain Bp).